The following is a 426-amino-acid chain: MAVQAALLSTHPFVPFGFGGSPDGLGGAFGALDKGCCFEDDETGAPAGALLSGAEGGDVREATRDLLSFIDSASSNIKLALDKPGKSKRKVNHRKYLQKQIKRCSGLMGAAPPGPPSPSAADTPAKRPLAAPSAPTVAAPAHGKAAPRREASQAAAAASLQSRSLAALFDSLRHVPGGAEPAGGEVAAPAAGLGGAGTGGAGGDVAGPAGATAIPGARKVPLRARNLPPSFFTEPSRAGGGGCGPSGPDVSLGDLEKGAEAVEFFELLGPDYGAGTEAAVLLAAEPLDVFPAGASVLRGPPELEPGLFEPPPAVVGNLLYPEPWSVPGCSPTKKSPLTAPRGGLTLNEPLSPLYPAAADSPGGEDGRGHLASFAPFFPDCALPPPPPPHQVSYDYSAGYSRTAYSSLWRSDGVWEGAPGEEGAHRD.

2 disordered regions span residues 106 to 157 (GLMG…AAAA) and 226 to 246 (NLPP…CGPS). The segment covering 128–141 (PLAAPSAPTVAAPA) has biased composition (low complexity).

This sequence belongs to the FAM181 family.

This is Protein FAM181B (FAM181B) from Homo sapiens (Human).